Consider the following 212-residue polypeptide: Large ribosomal subunit protein uL3 (212 aa).

Q153 carries the post-translational modification N5-methylglutamine.

This sequence belongs to the universal ribosomal protein uL3 family. Part of the 50S ribosomal subunit. Forms a cluster with proteins L14 and L19. Post-translationally, methylated by PrmB.

Functionally, one of the primary rRNA binding proteins, it binds directly near the 3'-end of the 23S rRNA, where it nucleates assembly of the 50S subunit. This chain is Large ribosomal subunit protein uL3, found in Shewanella woodyi (strain ATCC 51908 / MS32).